Consider the following 365-residue polypeptide: tRNA-specific 2-thiouridylase MnmA (365 aa).

ATP-binding positions include 9 to 16 and Met35; that span reads GLSGGVDS. The segment at 95–97 is interaction with target base in tRNA; it reads NPD. Cys100 acts as the Nucleophile in catalysis. The cysteines at positions 100 and 196 are disulfide-linked. Position 124 (Gly124) interacts with ATP. Positions 146–148 are interaction with tRNA; the sequence is KDQ. The Cysteine persulfide intermediate role is filled by Cys196. The segment at 315–316 is interaction with tRNA; it reads RY.

This sequence belongs to the MnmA/TRMU family.

The protein resides in the cytoplasm. It carries out the reaction S-sulfanyl-L-cysteinyl-[protein] + uridine(34) in tRNA + AH2 + ATP = 2-thiouridine(34) in tRNA + L-cysteinyl-[protein] + A + AMP + diphosphate + H(+). Catalyzes the 2-thiolation of uridine at the wobble position (U34) of tRNA, leading to the formation of s(2)U34. This Dechloromonas aromatica (strain RCB) protein is tRNA-specific 2-thiouridylase MnmA.